Reading from the N-terminus, the 636-residue chain is Molybdenum cofactor biosynthesis protein 1 (636 aa).

Residues 1 to 383 (MAARPAFGIV…QMKNRPMILI (383 aa)) form a molybdenum cofactor biosynthesis protein A region. Residues 19–40 (RGCSSGAPVTQPRPGEPSRPTR) form a disordered region. A Phosphoserine modification is found at Ser64. One can recognise a Radical SAM core domain in the interval 64–279 (SFGRQHSYLR…TIRQRWPGLE (216 aa)). A GTP-binding site is contributed by Arg73. 2 residues coordinate [4Fe-4S] cluster: Cys80 and Cys84. Residue Tyr86 participates in S-adenosyl-L-methionine binding. Cys87 lines the [4Fe-4S] cluster pocket. GTP is bound at residue Arg123. Gly127 contacts S-adenosyl-L-methionine. GTP is bound at residue Thr154. Ser178 is an S-adenosyl-L-methionine binding site. Lys198 is modified (N6-acetyllysine). Lys215 is a binding site for GTP. Residue Met249 participates in S-adenosyl-L-methionine binding. 2 residues coordinate [4Fe-4S] cluster: Cys312 and Cys315. 317 to 319 (RLR) contributes to the GTP binding site. A [4Fe-4S] cluster-binding site is contributed by Cys329. Positions 414 to 636 (QCLSDQMASL…GGQRGDFHRA (223 aa)) are molybdenum cofactor biosynthesis protein C. A disordered region spans residues 444 to 484 (SPQRHYSSYPDPDTHSKCLSTGSQAPDAPSGPGPTSNQLTH). Lys528 is modified (N6-acetyllysine). Residue Asp606 is the For molybdenum cofactor biosynthesis protein C activity of the active site.

This sequence in the C-terminal section; belongs to the MoaC family. The protein in the N-terminal section; belongs to the radical SAM superfamily. MoaA family. Isoform Mocs1a and isoform Mocs1b probably form a heterooligomer. The cofactor is [4Fe-4S] cluster.

The catalysed reaction is GTP + AH2 + S-adenosyl-L-methionine = (8S)-3',8-cyclo-7,8-dihydroguanosine 5'-triphosphate + 5'-deoxyadenosine + L-methionine + A + H(+). It catalyses the reaction (8S)-3',8-cyclo-7,8-dihydroguanosine 5'-triphosphate = cyclic pyranopterin phosphate + diphosphate. It functions in the pathway cofactor biosynthesis; molybdopterin biosynthesis. Functionally, isoform Mocs1a and isoform Mocs1b probably form a complex that catalyzes the conversion of 5'-GTP to cyclic pyranopterin monophosphate (cPMP). Mocs1a catalyzes the cyclization of GTP to (8S)-3',8-cyclo-7,8-dihydroguanosine 5'-triphosphate and Mocs1b catalyzes the subsequent conversion of (8S)-3',8-cyclo-7,8-dihydroguanosine 5'-triphosphate to cPMP. This Mus musculus (Mouse) protein is Molybdenum cofactor biosynthesis protein 1 (Mocs1).